The following is a 350-amino-acid chain: FAD:protein FMN transferase (350 aa).

Residues Met1–Gly19 form the signal peptide. Cys20 carries N-palmitoyl cysteine lipidation. Residue Cys20 is the site of S-diacylglycerol cysteine attachment. Residues Met41, Tyr78, Ala119–Asp121, and Asp181 each bind FAD. Thr184 is a binding site for Mg(2+). The FAD site is built by Glu187 and Ile272. The Mg(2+) site is built by Asp298, Asp301, and Thr302.

Belongs to the ApbE family. As to quaternary structure, homodimer. Mg(2+) serves as cofactor.

It localises to the cell inner membrane. The catalysed reaction is L-threonyl-[protein] + FAD = FMN-L-threonyl-[protein] + AMP + H(+). Its function is as follows. Flavin transferase that catalyzes the transfer of the FMN moiety of FAD and its covalent binding to the hydroxyl group of a threonine residue in a target flavoprotein such as NqrB and NqrC, two subunits of the NQR complex. This chain is FAD:protein FMN transferase, found in Salmonella typhimurium (strain LT2 / SGSC1412 / ATCC 700720).